Here is a 130-residue protein sequence, read N- to C-terminus: Protein ApaG (130 aa).

The 125-residue stretch at 3-127 folds into the ApaG domain; it reads SEVTRSIRVT…FSLDSPHGRS (125 aa).

This Rhodospirillum centenum (strain ATCC 51521 / SW) protein is Protein ApaG.